Reading from the N-terminus, the 904-residue chain is E3 ubiquitin-protein ligase HACE1 (904 aa).

ANK repeat units follow at residues 34-63 (AVYT…DVNY), 68-97 (VKRS…NPNY), 101-130 (SGCT…DVNI), 134-163 (EGLT…NVDV), 167-196 (MGQT…DINR), 200-230 (SGAT…YLPD), and 232-261 (NGVT…RLFQ). The HECT domain maps to 569-904 (SNEKLKQGIA…HCGSYGYTMA (336 aa)). The active-site Glycyl thioester intermediate is C871.

The protein localises to the golgi apparatus. It localises to the golgi stack membrane. The protein resides in the cytoplasm. Its subcellular location is the endoplasmic reticulum. The catalysed reaction is S-ubiquitinyl-[E2 ubiquitin-conjugating enzyme]-L-cysteine + [acceptor protein]-L-lysine = [E2 ubiquitin-conjugating enzyme]-L-cysteine + N(6)-ubiquitinyl-[acceptor protein]-L-lysine.. Its pathway is protein modification; protein ubiquitination. In terms of biological role, E3 ubiquitin-protein ligase involved in Golgi membrane fusion and regulation of small GTPases. Acts as a regulator of Golgi membrane dynamics during the cell cycle: recruited to Golgi membrane by Rab proteins and regulates postmitotic Golgi membrane fusion. Acts by mediating ubiquitination during mitotic Golgi disassembly, ubiquitination serving as a signal for Golgi reassembly later, after cell division. This is E3 ubiquitin-protein ligase HACE1 (hace1) from Danio rerio (Zebrafish).